A 197-amino-acid polypeptide reads, in one-letter code: Small ribosomal subunit protein eS1 (197 aa).

It belongs to the eukaryotic ribosomal protein eS1 family.

In Methanoculleus marisnigri (strain ATCC 35101 / DSM 1498 / JR1), this protein is Small ribosomal subunit protein eS1.